A 377-amino-acid chain; its full sequence is Glutamate 5-kinase (377 aa).

Lys20 serves as a coordination point for ATP. Residues Ser59, Asp146, and Asn158 each coordinate substrate. Residues 178 to 179 (SD) and 220 to 226 (TGGMSTK) each bind ATP. Residues 285 to 363 (RGTLTVDAGA…ADIEAVLGYR (79 aa)) form the PUA domain.

It belongs to the glutamate 5-kinase family.

The protein localises to the cytoplasm. It catalyses the reaction L-glutamate + ATP = L-glutamyl 5-phosphate + ADP. It functions in the pathway amino-acid biosynthesis; L-proline biosynthesis; L-glutamate 5-semialdehyde from L-glutamate: step 1/2. Functionally, catalyzes the transfer of a phosphate group to glutamate to form L-glutamate 5-phosphate. The sequence is that of Glutamate 5-kinase from Myxococcus xanthus (strain DK1622).